Consider the following 173-residue polypeptide: MSIILGIDPGSRVTGYGVIRQTGRQLTYLGSGCIRTSVTDLPSRLKLIYAGVSEIITQFRPDYFAIEQVFMAKNADSALKLGQARGAAIVAAVNHDLPVFEYAARQVKQTVVGIGSAEKSQVQHMVRTLLKLSANPQADAADALAIAITHCHVSQNATQVSESRLNLARGRLR.

Active-site residues include D8, E67, and D139. D8, E67, and D139 together coordinate Mg(2+).

It belongs to the RuvC family. In terms of assembly, homodimer which binds Holliday junction (HJ) DNA. The HJ becomes 2-fold symmetrical on binding to RuvC with unstacked arms; it has a different conformation from HJ DNA in complex with RuvA. In the full resolvosome a probable DNA-RuvA(4)-RuvB(12)-RuvC(2) complex forms which resolves the HJ. Requires Mg(2+) as cofactor.

The protein resides in the cytoplasm. It carries out the reaction Endonucleolytic cleavage at a junction such as a reciprocal single-stranded crossover between two homologous DNA duplexes (Holliday junction).. In terms of biological role, the RuvA-RuvB-RuvC complex processes Holliday junction (HJ) DNA during genetic recombination and DNA repair. Endonuclease that resolves HJ intermediates. Cleaves cruciform DNA by making single-stranded nicks across the HJ at symmetrical positions within the homologous arms, yielding a 5'-phosphate and a 3'-hydroxyl group; requires a central core of homology in the junction. The consensus cleavage sequence is 5'-(A/T)TT(C/G)-3'. Cleavage occurs on the 3'-side of the TT dinucleotide at the point of strand exchange. HJ branch migration catalyzed by RuvA-RuvB allows RuvC to scan DNA until it finds its consensus sequence, where it cleaves and resolves the cruciform DNA. The protein is Crossover junction endodeoxyribonuclease RuvC of Cronobacter sakazakii (strain ATCC BAA-894) (Enterobacter sakazakii).